Consider the following 222-residue polypeptide: N-(5'-phosphoribosyl)anthranilate isomerase (222 aa).

It belongs to the TrpF family.

The enzyme catalyses N-(5-phospho-beta-D-ribosyl)anthranilate = 1-(2-carboxyphenylamino)-1-deoxy-D-ribulose 5-phosphate. The protein operates within amino-acid biosynthesis; L-tryptophan biosynthesis; L-tryptophan from chorismate: step 3/5. The protein is N-(5'-phosphoribosyl)anthranilate isomerase of Xanthomonas campestris pv. campestris (strain 8004).